The sequence spans 325 residues: D-xylose 1-dehydrogenase (NADP(+)) 2 (325 aa).

The N-terminal stretch at 1–22 (MMFGILGTAGIGVKSVIPAVQA) is a signal peptide.

It belongs to the Gfo/Idh/MocA family. In terms of assembly, homotetramer.

The protein resides in the secreted. The catalysed reaction is D-xylose + NADP(+) = D-xylono-1,5-lactone + NADPH + H(+). In terms of biological role, NADP-dependent D-xylose dehydrogenase involved in the degradation of D-xylose, a major component of hemicelluloses such as xylan. Even if it shows D-xylose dehydrogenase activity, it is not essential for D-xylose degradation. This is D-xylose 1-dehydrogenase (NADP(+)) 2 from Haloferax volcanii (strain ATCC 29605 / DSM 3757 / JCM 8879 / NBRC 14742 / NCIMB 2012 / VKM B-1768 / DS2) (Halobacterium volcanii).